Consider the following 163-residue polypeptide: Putative protein CASTOR3P (163 aa).

This sequence belongs to the GATS family.

This is Putative protein CASTOR3P from Homo sapiens (Human).